The following is a 404-amino-acid chain: F-box only protein 12 (404 aa).

Residues 1-44 (MKNSIPIDLIYEILSRLPAKSVARCRCVSKRWRSILRHQVFTEL) enclose the F-box domain. Residues 383-403 (LAILFCLFFLLFNYLIRLCWV) traverse the membrane as a helical segment.

The protein localises to the membrane. The polypeptide is F-box only protein 12 (FBX12) (Arabidopsis thaliana (Mouse-ear cress)).